We begin with the raw amino-acid sequence, 469 residues long: Zinc transporter SLC39A7 (469 aa).

A helical transmembrane segment spans residues 10–30; that stretch reads WVAVGLLTWATLGLLVAGLGG. Basic and acidic residues-rich tracts occupy residues 42 to 56 and 66 to 114; these read FHGH…DFHH and HTHE…EHSH. The segment at 42 to 121 is disordered; the sequence is FHGHSHRHSH…HSHGGYGESG (80 aa). H66 bears the Pros-methylhistidine mark. 3 helical membrane-spanning segments follow: residues 138-158, 169-189, and 214-234; these read ALGA…LIPV, LQIL…LHLI, and GPIL…LVVE. A compositionally biased stretch (basic residues) spans 242–263; it reads GGHGHSHGHGHAHSHTRGSHGH. Residues 242-310 form a disordered region; sequence GGHGHSHGHG…VRPQNAEEEK (69 aa). Basic and acidic residues predominate over residues 264–285; it reads GRQERSTKEKQSSEEEEKETRG. 2 positions are modified to phosphoserine; by CK2: S275 and S276. 2 helical membrane passes run 381-401 and 417-436; these read MRLQ…ALLT and GWVL…VSVL.

This sequence belongs to the ZIP transporter (TC 2.A.5) family. KE4/Catsup subfamily. As to quaternary structure, homodimer. Rapidly phosphorylated by CK2 following Zn(2+) treatment. This phosphorylation is required for efficient cytosolic Zn(2+) release. In terms of processing, methylation at some His residue by METTL9 leads to reduced zinc-binding. As to expression, widely expressed.

Its subcellular location is the endoplasmic reticulum membrane. The protein localises to the golgi apparatus. The protein resides in the cis-Golgi network membrane. The catalysed reaction is Zn(2+)(in) = Zn(2+)(out). Its activity is regulated as follows. Phosphorylation activates zinc transport activity. In terms of biological role, transports Zn(2+) from the endoplasmic reticulum (ER)/Golgi apparatus to the cytosol, playing an essential role in the regulation of cytosolic zinc levels. Acts as a gatekeeper of zinc release from intracellular stores, requiring post-translational activation by phosphorylation, resulting in activation of multiple downstream pathways leading to cell growth and proliferation. Has an essential role in B cell development and is required for proper B cell receptor signaling. Plays an important role in maintaining intestinal epithelial homeostasis and skin dermis development by regulating ER function. Controls cell signaling pathways involved in glucose metabolism in skeletal muscle. Has a protective role against ER stress in different biological contexts. Mediates Zn(2+)-induced ferroptosis. The polypeptide is Zinc transporter SLC39A7 (SLC39A7) (Homo sapiens (Human)).